A 1957-amino-acid polypeptide reads, in one-letter code: Sporulation-specific protein 15 (1957 aa).

2 stretches are compositionally biased toward low complexity: residues 1–12 (MSNQSSSGSNTS) and 19–28 (ASSLVSSAAS). A disordered region spans residues 1–102 (MSNQSSSGSN…STASSALPLT (102 aa)). A compositionally biased stretch (basic and acidic residues) spans 58-83 (SQHEDSSEELKRQEVRGMRRHSDLSI). A compositionally biased stretch (polar residues) spans 90–102 (SEGSTASSALPLT). At S105 the chain carries Phosphoserine. 4 coiled-coil regions span residues 199-785 (KQSE…FTSL), 804-1235 (VNMQ…DLLD), 1320-1471 (KVVA…SLDD), and 1481-1723 (EKLG…EQHE).

It belongs to the MPC70 family. In terms of assembly, monomer.

It localises to the cytoplasm. Its subcellular location is the cytoskeleton. It is found in the microtubule organizing center. The protein localises to the spindle pole body. Its function is as follows. Has a role in the initiation of spore membrane formation. The protein is Sporulation-specific protein 15 (spo15) of Schizosaccharomyces pombe (strain 972 / ATCC 24843) (Fission yeast).